The following is a 131-amino-acid chain: Large ribosomal subunit protein bL17 (131 aa).

Belongs to the bacterial ribosomal protein bL17 family. As to quaternary structure, part of the 50S ribosomal subunit. Contacts protein L32.

The protein is Large ribosomal subunit protein bL17 of Polynucleobacter necessarius subsp. necessarius (strain STIR1).